The chain runs to 269 residues: Phosphate import ATP-binding protein PstB 1 (269 aa).

One can recognise an ABC transporter domain in the interval 16–255; the sequence is FTTQNLDIYY…DRTGKVFGDP (240 aa). ATP is bound at residue 48–55; it reads GPSGCGKS.

It belongs to the ABC transporter superfamily. Phosphate importer (TC 3.A.1.7) family. As to quaternary structure, the complex is composed of two ATP-binding proteins (PstB), two transmembrane proteins (PstC and PstA) and a solute-binding protein (PstS).

The protein resides in the cell inner membrane. The catalysed reaction is phosphate(out) + ATP + H2O = ADP + 2 phosphate(in) + H(+). Functionally, part of the ABC transporter complex PstSACB involved in phosphate import. Responsible for energy coupling to the transport system. This chain is Phosphate import ATP-binding protein PstB 1, found in Synechocystis sp. (strain ATCC 27184 / PCC 6803 / Kazusa).